Consider the following 698-residue polypeptide: Ion-translocating oxidoreductase complex subunit C (698 aa).

4Fe-4S ferredoxin-type domains lie at 366-397 (TEMG…QQLY) and 407-436 (KARN…VQYY). Residues Cys377, Cys380, Cys383, Cys387, Cys416, Cys419, Cys422, and Cys426 each contribute to the [4Fe-4S] cluster site.

The protein belongs to the 4Fe4S bacterial-type ferredoxin family. RnfC subfamily. As to quaternary structure, the complex is composed of six subunits: RnfA, RnfB, RnfC, RnfD, RnfE and RnfG. [4Fe-4S] cluster is required as a cofactor.

It localises to the cell inner membrane. Part of a membrane-bound complex that couples electron transfer with translocation of ions across the membrane. The polypeptide is Ion-translocating oxidoreductase complex subunit C (Yersinia pseudotuberculosis serotype O:1b (strain IP 31758)).